A 218-amino-acid polypeptide reads, in one-letter code: Variable small protein 8 (218 aa).

An N-terminal signal peptide occupies residues 1–18 (MRKRISAIIMTLFMVFMS). Cysteine 19 carries the N-palmitoyl cysteine lipid modification. A lipid anchor (S-diacylglycerol cysteine) is attached at cysteine 19.

It belongs to the variable small protein (Vsp) family.

It is found in the cell outer membrane. The Vlp and Vsp proteins are antigenically distinct proteins, only one vlp or vsp gene is transcriptionally active at any one time. Switching between these genes is a mechanism of host immune response evasion. The protein is Variable small protein 8 of Borrelia hermsii.